Consider the following 1382-residue polypeptide: Hepatocyte growth factor receptor (1382 aa).

An N-terminal signal peptide occupies residues 1–24 (MKAPAVLAPGVLVLLFTLVRKSHG). Residues 25–935 (ECEEALAKSK…VQPDQNFTGL (911 aa)) are Extracellular-facing. Residues 27–516 (EEALAKSKMN…TGKKITKIPL (490 aa)) form the Sema domain. Asn45 carries N-linked (GlcNAc...) asparagine glycosylation. Intrachain disulfides connect Cys95–Cys101, Cys98–Cys160, Cys133–Cys141, and Cys173–Cys176. Asn106 carries an N-linked (GlcNAc...) asparagine glycan. Asn203 and Asn359 each carry an N-linked (GlcNAc...) asparagine glycan. Disulfide bonds link Cys299-Cys364 and Cys386-Cys398. Residues Asn400, Asn406, and Asn450 are each glycosylated (N-linked (GlcNAc...) asparagine). Cystine bridges form between Cys521/Cys539, Cys527/Cys562, Cys530/Cys546, and Cys542/Cys552. 3 consecutive IPT/TIG domains span residues 564–656 (PTIY…FSYV), 658–740 (PVIT…FSYQ), and 743–837 (PTVY…LIYV). An O-linked (Man) threonine glycan is attached at Thr583. 2 N-linked (GlcNAc...) asparagine glycosylation sites follow: Asn608 and Asn636. Thr677 carries O-linked (Man) threonine glycosylation. The N-linked (GlcNAc...) asparagine glycan is linked to Asn751. Thr762 carries O-linked (Man) threonine glycosylation. Asn786, Asn880, and Asn931 each carry an N-linked (GlcNAc...) asparagine glycan. Residues 936 to 956 (IVGVVSISIILLLLLGLFLWL) traverse the membrane as a helical segment. Over 957–1382 (KKRKQIKDLG…QDSVDDEVDT (426 aa)) the chain is Cytoplasmic. Ser967 carries the phosphoserine modification. Thr978 carries the post-translational modification Phosphothreonine. Phosphoserine occurs at positions 991, 998, and 1001. Tyr1004 is modified (phosphotyrosine). In terms of domain architecture, Protein kinase spans 1079 to 1346 (VHFNEVIGRG…RISAIFSTFI (268 aa)). Residues 1085–1093 (IGRGHFGCV) and Lys1111 contribute to the ATP site. Asp1205 (proton acceptor) is an active-site residue. The interaction with RANBP9 stretch occupies residues 1213 to 1382 (LDEKFTVKVA…QDSVDDEVDT (170 aa)). At Tyr1231 the chain carries Phosphotyrosine. Phosphotyrosine; by autocatalysis is present on residues Tyr1235 and Tyr1236. Thr1290 carries the post-translational modification Phosphothreonine. The interaction with MUC20 stretch occupies residues 1321–1360 (WHPKAEMRPSFSELVSRISAIFSTFIGEHYVHVNTTYVNV). Phosphotyrosine; by autocatalysis is present on residues Tyr1350 and Tyr1357. Phosphotyrosine is present on Tyr1366.

Belongs to the protein kinase superfamily. Tyr protein kinase family. In terms of assembly, heterodimer made of an alpha chain (50 kDa) and a beta chain (145 kDa) which are disulfide linked. Binds PLXNB1. Interacts when phosphorylated with downstream effectors including STAT3, PIK3R1, SRC, PCLG1, GRB2 and GAB1. Interacts with SPSB1, SPSB2 and SPSB4. Interacts with INPP5D/SHIP1. When phosphorylated at Tyr-1357, interacts with INPPL1/SHIP2. Interacts with RANBP9 and RANBP10, as well as SPSB1, SPSB2, SPSB3 and SPSB4. SPSB1 binding occurs in the presence and in the absence of HGF, however HGF treatment has a positive effect on this interaction. Interacts with MUC20; prevents interaction with GRB2 and suppresses hepatocyte growth factor-induced cell proliferation. Interacts with GRB10. Interacts with PTPN1 and PTPN2. Interacts with HSP90AA1 and HSP90AB1; the interaction suppresses MET kinase activity. Interacts with tensin TNS3. Interacts (when phosphorylated) with tensin TNS4 (via SH2 domain); the interaction increases MET protein stability by inhibiting MET endocytosis and subsequent lysosomal degradation. Autophosphorylated in response to ligand binding on Tyr-1235 and Tyr-1236 in the kinase domain leading to further phosphorylation of Tyr-1350 and Tyr-1357 in the C-terminal multifunctional docking site. Dephosphorylated by PTPRJ at Tyr-1350 and Tyr-1366. Dephosphorylated by PTPN1 and PTPN2. In terms of processing, ubiquitinated. Ubiquitination by CBL regulates the receptor stability and activity through proteasomal degradation. Post-translationally, O-mannosylation of IPT/TIG domains by TMEM260 is required for protein maturation. O-mannosylated residues are composed of single mannose glycans that are not elongated or modified.

It localises to the membrane. It catalyses the reaction L-tyrosyl-[protein] + ATP = O-phospho-L-tyrosyl-[protein] + ADP + H(+). In its inactive state, the C-terminal tail interacts with the catalytic domain and inhibits the kinase activity. Upon ligand binding, the C-terminal tail is displaced and becomes phosphorylated, thus increasing the kinase activity. In terms of biological role, receptor tyrosine kinase that transduces signals from the extracellular matrix into the cytoplasm by binding to hepatocyte growth factor/HGF ligand. Regulates many physiological processes including proliferation, scattering, morphogenesis and survival. Ligand binding at the cell surface induces autophosphorylation of MET on its intracellular domain that provides docking sites for downstream signaling molecules. Following activation by ligand, interacts with the PI3-kinase subunit PIK3R1, PLCG1, SRC, GRB2, STAT3 or the adapter GAB1. Recruitment of these downstream effectors by MET leads to the activation of several signaling cascades including the RAS-ERK, PI3 kinase-AKT, or PLCgamma-PKC. The RAS-ERK activation is associated with the morphogenetic effects while PI3K/AKT coordinates prosurvival effects. During embryonic development, MET signaling plays a role in gastrulation, development and migration of muscles and neuronal precursors, angiogenesis and kidney formation. In adults, participates in wound healing as well as organ regeneration and tissue remodeling. Also promotes differentiation and proliferation of hematopoietic cells. This is Hepatocyte growth factor receptor (MET) from Loxodonta africana (African elephant).